A 393-amino-acid chain; its full sequence is uncharacterized protein (393 aa).

Cysteine 72, cysteine 82, cysteine 85, and cysteine 160 together coordinate [4Fe-4S] cluster. The S-adenosyl-L-methionine site is built by glutamine 215, phenylalanine 245, glutamate 267, and aspartate 313. Cysteine 340 (nucleophile) is an active-site residue.

It belongs to the class I-like SAM-binding methyltransferase superfamily. RNA M5U methyltransferase family.

This is an uncharacterized protein from Nitrosomonas europaea (strain ATCC 19718 / CIP 103999 / KCTC 2705 / NBRC 14298).